The chain runs to 235 residues: MNIVIDVGNNYIKIGAFSGGKLQWTKTYSRLHDVLQAVQAEKPVHVFISSVRNQTDFSALETVTQVHFLNKHTRLPIDIDYETPHTLGTDRIAAAVGAATLFPGCNNLFFDLGTCLTHGFINTKAVFEGGSISPGVEMRFKALAHFTEKLPLVKAEKEPPLTGKSTSGSIMSGVLNGIQFEIEGFIEAYQNKYTPINVLLTGGNASLFEKRLKEPIFVIAELNLIGLNRILNYNV.

ATP is bound at residue 6 to 13 (DVGNNYIK). Substrate contacts are provided by residues Tyr81 and 88-91 (GTDR). The active-site Proton acceptor is the Asp90. Asp111 provides a ligand contact to K(+). Thr114 contacts ATP. Thr166 provides a ligand contact to substrate.

The protein belongs to the type III pantothenate kinase family. In terms of assembly, homodimer. The cofactor is NH4(+). It depends on K(+) as a cofactor.

It is found in the cytoplasm. The enzyme catalyses (R)-pantothenate + ATP = (R)-4'-phosphopantothenate + ADP + H(+). It functions in the pathway cofactor biosynthesis; coenzyme A biosynthesis; CoA from (R)-pantothenate: step 1/5. In terms of biological role, catalyzes the phosphorylation of pantothenate (Pan), the first step in CoA biosynthesis. This is Type III pantothenate kinase from Cytophaga hutchinsonii (strain ATCC 33406 / DSM 1761 / CIP 103989 / NBRC 15051 / NCIMB 9469 / D465).